The chain runs to 538 residues: Exo-alpha-bergamotene synthase (538 aa).

Asp-291, Asp-295, Asp-435, Thr-439, and Glu-443 together coordinate Mg(2+). The short motif at 291–295 (DDIYD) is the DDXXD motif element.

The protein belongs to the terpene synthase family. It depends on Mg(2+) as a cofactor. Requires Mn(2+) as cofactor.

The enzyme catalyses (2E,6E)-farnesyl diphosphate = (1S,5S,6R)-alpha-bergamotene + diphosphate. Catalyzes a mixture of sesquiterpenoids from (2E,6E)-farnesyl diphosphate. Catalyzes the formation of exo-alpha-bergamotene, as well as (E)-nerolidol, (Z)-alpha-bisabolene, (E)-beta-farnesene and beta-sesquiphellandrene. Also has activity towards geranyl diphosphate, but to a much lesser extent. The chain is Exo-alpha-bergamotene synthase from Lavandula angustifolia (Lavender).